The following is a 356-amino-acid chain: NADH-quinone oxidoreductase subunit H (356 aa).

The next 8 membrane-spanning stretches (helical) occupy residues 4–24, 79–99, 127–147, 166–186, 198–218, 251–271, 289–309, and 329–349; these read ALILAWGIKILSLFFVILTGV, LLAPTISMTCAIMAWAVIPFG, GVLYMLAISSLSVYGIMIAGW, ISYELPMGLSIVAIVIMTGSL, MWNILSPPGFVAFFIYVTAMF, FFLAEYMNMITMSCLTTLLFF, FIGLGFFILKVLFFAFLFIWV, and MIPWGLFVVMFASIYTVYWKE.

The protein belongs to the complex I subunit 1 family. NDH-1 is composed of 14 different subunits. Subunits NuoA, H, J, K, L, M, N constitute the membrane sector of the complex.

It is found in the cell inner membrane. It catalyses the reaction a quinone + NADH + 5 H(+)(in) = a quinol + NAD(+) + 4 H(+)(out). In terms of biological role, NDH-1 shuttles electrons from NADH, via FMN and iron-sulfur (Fe-S) centers, to quinones in the respiratory chain. The immediate electron acceptor for the enzyme in this species is believed to be ubiquinone. Couples the redox reaction to proton translocation (for every two electrons transferred, four hydrogen ions are translocated across the cytoplasmic membrane), and thus conserves the redox energy in a proton gradient. This subunit may bind ubiquinone. The protein is NADH-quinone oxidoreductase subunit H of Leptospira biflexa serovar Patoc (strain Patoc 1 / ATCC 23582 / Paris).